We begin with the raw amino-acid sequence, 76 residues long: Kappa-actitoxin-Avd4d (76 aa).

Residues 1–19 form the signal peptide; that stretch reads MNKALFLCLVVLCAAVVFA. Residues 20–31 constitute a propeptide that is removed on maturation; the sequence is AEDLQKAKHVPF. 3 disulfide bridges follow: Cys-37/Cys-72, Cys-39/Cys-65, and Cys-55/Cys-73.

It belongs to the sea anemone type 3 (BDS) potassium channel toxin family. Moderately expressed in the ectodermal tissue from the distal and proximal tentacles, body wall, and oral disk.

It is found in the secreted. Its subcellular location is the nematocyst. Functionally, blocks Kv3 voltage-gated potassium channels. Reduces blood pressure. The chain is Kappa-actitoxin-Avd4d from Anemonia viridis (Snakelocks anemone).